A 126-amino-acid chain; its full sequence is MAIVGIGTDIVEIGRIEAVVSRSGDRLARRILSPDEWRQYQQHNQLVRFLAKRFAVKEAASKALGTGIRDGLAFTQFEVCNDALGKPSLRLFDQAVVLANRLGVTGMHVTLADERHYACATVIFER.

Mg(2+)-binding residues include aspartate 9 and glutamate 58.

This sequence belongs to the P-Pant transferase superfamily. AcpS family. The cofactor is Mg(2+).

It localises to the cytoplasm. It carries out the reaction apo-[ACP] + CoA = holo-[ACP] + adenosine 3',5'-bisphosphate + H(+). Functionally, transfers the 4'-phosphopantetheine moiety from coenzyme A to a Ser of acyl-carrier-protein. The chain is Holo-[acyl-carrier-protein] synthase from Sodalis glossinidius (strain morsitans).